The primary structure comprises 312 residues: Protoheme IX farnesyltransferase (312 aa).

The Cytoplasmic segment spans residues 1 to 36; that stretch reads MNKSNTAIDPTNVIEAGPDSSVADVQQKSWKDYLVL. The chain crosses the membrane as a helical span at residues 37 to 55; it reads AKQGIVTSNLITTFAGIYL. The Extracellular segment spans residues 56–69; sequence AIVYTGTVFTMHLD. Residues 70–88 form a helical membrane-spanning segment; it reads TMIFALLGAALVMAGGCTL. Residues 89–110 are Cytoplasmic-facing; that stretch reads NNYIDRDIDHLMERTKERPTVT. A helical membrane pass occupies residues 111–129; that stretch reads GRFSAKHVLLVGLAQAALG. Residues 130–138 are Extracellular-facing; the sequence is IIFLALTTP. Residues 139 to 157 form a helical membrane-spanning segment; sequence TAAVIGLIGLFIYVVLYTM. Residues 158–228 are Cytoplasmic-facing; the sequence is WTKRTTTLNT…YRAAGIPMLP (71 aa). Residues 229–247 traverse the membrane as a helical segment; that stretch reads VVAGFEMTKRQMVVYVAAL. Topologically, residues 248-259 are extracellular; that stretch reads LPVSLMLYPFGL. Residues 260 to 275 traverse the membrane as a helical segment; that stretch reads VYTIVAAVLGVGWLAL. At 276 to 296 the chain is on the cytoplasmic side; the sequence is GIAGFKMKDDIKWARLMFVYS. The chain crosses the membrane as a helical span at residues 297 to 307; that stretch reads LNYLTILFVLM. The Extracellular portion of the chain corresponds to 308–312; sequence VIVHF.

It belongs to the UbiA prenyltransferase family.

It is found in the cell membrane. It carries out the reaction heme b + (2E,6E)-farnesyl diphosphate + H2O = Fe(II)-heme o + diphosphate. It functions in the pathway porphyrin-containing compound metabolism; heme O biosynthesis; heme O from protoheme: step 1/1. Functionally, converts protoheme IX and farnesyl diphosphate to heme O. The sequence is that of Protoheme IX farnesyltransferase (ctaB) from Alkalihalophilus pseudofirmus (strain ATCC BAA-2126 / JCM 17055 / OF4) (Bacillus pseudofirmus).